The primary structure comprises 883 residues: Phosphoenolpyruvate carboxylase (883 aa).

Residues H138 and K546 contribute to the active site.

Belongs to the PEPCase type 1 family. Mg(2+) serves as cofactor.

It catalyses the reaction oxaloacetate + phosphate = phosphoenolpyruvate + hydrogencarbonate. In terms of biological role, forms oxaloacetate, a four-carbon dicarboxylic acid source for the tricarboxylic acid cycle. This Shigella dysenteriae serotype 1 (strain Sd197) protein is Phosphoenolpyruvate carboxylase.